A 577-amino-acid polypeptide reads, in one-letter code: Arginine--tRNA ligase (577 aa).

The 'HIGH' region motif lies at 122–132; that stretch reads PNVAKEMHVGH.

The protein belongs to the class-I aminoacyl-tRNA synthetase family. Monomer.

The protein localises to the cytoplasm. The enzyme catalyses tRNA(Arg) + L-arginine + ATP = L-arginyl-tRNA(Arg) + AMP + diphosphate. The protein is Arginine--tRNA ligase (argS) of Salmonella typhimurium (strain SL1344).